A 143-amino-acid polypeptide reads, in one-letter code: Nucleoside diphosphate kinase (143 aa).

Residues lysine 11, phenylalanine 59, arginine 87, threonine 93, arginine 104, and asparagine 114 each coordinate ATP. Catalysis depends on histidine 117, which acts as the Pros-phosphohistidine intermediate.

It belongs to the NDK family. Homotetramer. Requires Mg(2+) as cofactor.

The protein localises to the cytoplasm. It catalyses the reaction a 2'-deoxyribonucleoside 5'-diphosphate + ATP = a 2'-deoxyribonucleoside 5'-triphosphate + ADP. The catalysed reaction is a ribonucleoside 5'-diphosphate + ATP = a ribonucleoside 5'-triphosphate + ADP. Its function is as follows. Major role in the synthesis of nucleoside triphosphates other than ATP. The ATP gamma phosphate is transferred to the NDP beta phosphate via a ping-pong mechanism, using a phosphorylated active-site intermediate. This is Nucleoside diphosphate kinase from Shewanella sp. (strain W3-18-1).